The primary structure comprises 145 residues: MELPLGSDLARLVRVWRALVDHRLKPLELTQTHWVTLHNIYHLPPGQSQIQLAKAIGIEQPSLVRTLDQLEEKGLITRHVCAHDRRAKRIMLTESAEPIIQAVDGVISHTRSEVLFGITPEQVDELALLVARLEKNILALHENQA.

The 134-residue stretch at 2-135 folds into the HTH marR-type domain; the sequence is ELPLGSDLAR…LALLVARLEK (134 aa). Positions 49–72 form a DNA-binding region, H-T-H motif; the sequence is QIQLAKAIGIEQPSLVRTLDQLEE.

The protein belongs to the SlyA family. As to quaternary structure, homodimer.

In terms of biological role, transcription regulator that can specifically activate or repress expression of target genes. The polypeptide is Transcriptional regulator SlyA (Pectobacterium atrosepticum (strain SCRI 1043 / ATCC BAA-672) (Erwinia carotovora subsp. atroseptica)).